The sequence spans 300 residues: Glycine betaine/carnitine transport binding protein GbuC (300 aa).

Positions 1 to 20 (MLKKLITTAVLAMLIFTLAA) are cleaved as a signal peptide. C21 carries N-palmitoyl cysteine lipidation. A lipid anchor (S-diacylglycerol cysteine) is attached at C21.

The complex is composed of two ATP-binding proteins (GbuA), two transmembrane proteins (GbuB) and a solute-binding protein (GbuC).

Its subcellular location is the cell membrane. Its activity is regulated as follows. The complex is activated by an osmotic gradient or by low temperature. Functionally, part of the ABC transporter complex GbuABC involved in glycine betaine uptake. Involved, with BetL and OpuC, in osmoprotection and cryoprotection of Listeria. Can also uptake carnitine when carnitine is abundant in the growth medium. This is Glycine betaine/carnitine transport binding protein GbuC (gbuC) from Listeria monocytogenes serotype 1/2a (strain 10403S).